The chain runs to 488 residues: Ribulose bisphosphate carboxylase large chain (488 aa).

Residues Asn127 and Thr177 each coordinate substrate. Catalysis depends on Lys179, which acts as the Proton acceptor. Residue Lys181 participates in substrate binding. The Mg(2+) site is built by Lys205, Asp207, and Glu208. The residue at position 205 (Lys205) is an N6-carboxylysine. His297 functions as the Proton acceptor in the catalytic mechanism. Substrate contacts are provided by Arg298, His330, and Ser382.

The protein belongs to the RuBisCO large chain family. Type I subfamily. Heterohexadecamer of 8 large chains and 8 small chains. It depends on Mg(2+) as a cofactor.

The protein resides in the plastid. It is found in the chloroplast. The catalysed reaction is 2 (2R)-3-phosphoglycerate + 2 H(+) = D-ribulose 1,5-bisphosphate + CO2 + H2O. It catalyses the reaction D-ribulose 1,5-bisphosphate + O2 = 2-phosphoglycolate + (2R)-3-phosphoglycerate + 2 H(+). In terms of biological role, ruBisCO catalyzes two reactions: the carboxylation of D-ribulose 1,5-bisphosphate, the primary event in carbon dioxide fixation, as well as the oxidative fragmentation of the pentose substrate in the photorespiration process. Both reactions occur simultaneously and in competition at the same active site. The protein is Ribulose bisphosphate carboxylase large chain of Cyanidium caldarium (Red alga).